A 1043-amino-acid chain; its full sequence is Calcium-transporting ATPase 1, plasma membrane-type (1043 aa).

The Cytoplasmic portion of the chain corresponds to 1-178; the sequence is MSFIRKKSME…FLWDASQDMT (178 aa). The next 2 membrane-spanning stretches (helical) occupy residues 179–199 and 202–222; these read LLLL…TEGW and GMYD…ITAA. Residues 223-258 are Cytoplasmic-facing; that stretch reads SDYKQSLQFRDLDKEKKKIDVQVTRDGYRQKVSIYD. The next 2 membrane-spanning stretches (helical) occupy residues 259-279 and 356-376; these read IVVG…DGLF and VATI…TVLM. Residues 377-395 are Cytoplasmic-facing; that stretch reads ARFLLGKAGAPGGLLRWRM. The chain crosses the membrane as a helical span at residues 396-416; sequence VDALAVLNFFAVAVTIIVVAV. Asp460 serves as the catalytic 4-aspartylphosphate intermediate. Residues Asp761 and Asp765 each coordinate Mg(2+). The helical transmembrane segment at 824–844 threads the bilayer; sequence LTVNVVALMVNFISASFTGSA. A topological domain (cytoplasmic) is located at residue Pro845. Transmembrane regions (helical) follow at residues 846-866 and 891-911; these read LTIV…ALAL and VMWR…GVLL. Residues 912 to 955 are Cytoplasmic-facing; that stretch reads LRGKSLLQINGPQADSLLNTFVFNTFVFCQVFNEVNSREMEKIN. 2 helical membrane-spanning segments follow: residues 956–976 and 998–1018; these read VFSG…TAGF and WLTS…LKCI. The Cytoplasmic portion of the chain corresponds to 1019–1043; that stretch reads PVESGSDASDRHDGYRPIPTGPSAV. The disordered stretch occupies residues 1023-1043; sequence GSDASDRHDGYRPIPTGPSAV.

This sequence belongs to the cation transport ATPase (P-type) (TC 3.A.3) family. Type IIB subfamily.

It localises to the membrane. It catalyses the reaction Ca(2+)(in) + ATP + H2O = Ca(2+)(out) + ADP + phosphate + H(+). With respect to regulation, activated by calmodulin. This magnesium-dependent enzyme catalyzes the hydrolysis of ATP coupled with the translocation of calcium from the cytosol out of the cell, into the endoplasmic reticulum, or into organelles. The protein is Calcium-transporting ATPase 1, plasma membrane-type of Oryza sativa subsp. japonica (Rice).